Here is a 202-residue protein sequence, read N- to C-terminus: Transmembrane protein 223 (202 aa).

Residues 1–43 are Mitochondrial matrix-facing; that stretch reads MAAPGRRWSVLLFRALQSLSARRALHDTAPPRDVLLFEHERGR. Residues 44-64 traverse the membrane as a helical segment; sequence FFAVLGLFCAGQGVFWASLAI. Residues 65–97 lie on the Mitochondrial intermembrane side of the membrane; that stretch reads ASLARPPTPVRPTDAKTPDHGGLDLRSTLWRYG. A helical transmembrane segment spans residues 98–118; it reads LAVGCGAIGSLVLGAGLLFSL. Residues 119 to 202 lie on the Mitochondrial matrix side of the membrane; the sequence is RSVRSVMLRA…DNTVGAYRSL (84 aa).

The protein belongs to the TMEM223 family. As to quaternary structure, associates with the mitochondrial ribosome.

The protein localises to the mitochondrion inner membrane. Its function is as follows. Mitochondrial ribosome-associated protein involved in the first steps of cytochrome c oxidase complex (complex IV) biogenesis. Stimulates the translation of MT-CO1 mRNA and is a constituent of early MT-CO1 assembly intermediates. This Bos taurus (Bovine) protein is Transmembrane protein 223.